Reading from the N-terminus, the 479-residue chain is (R)-1-hydroxy-2-aminoethylphosphonate ammonia-lyase (479 aa).

Lys-317 bears the N6-(pyridoxal phosphate)lysine mark.

The protein belongs to the class-III pyridoxal-phosphate-dependent aminotransferase family. The cofactor is pyridoxal 5'-phosphate.

It carries out the reaction (1R)-(2-amino-1-hydroxyethyl)phosphonate = phosphonoacetaldehyde + NH4(+). Its function is as follows. Involved in phosphonate degradation. Functions as a lyase that catalyzes an elimination reaction on the naturally occurring compound (R)-1-hydroxy-2-aminoethylphosphonate ((R)-HAEP), releasing ammonia and generating phosphonoacetaldehyde (PAA), which can be then hydrolyzed by PhnX, encoded by an adjacent gene. Thus, catalyzes a reaction that serves to funnel (R)-HAEP into the hydrolytic pathway for aminoethylphosphonate (AEP, the most common biogenic phosphonate) degradation, expanding the scope and the usefulness of the pathway itself. Is not active toward the (S) enantiomer of HAEP or other HAEP-related compounds such as ethanolamine and D,L-isoserine, indicating a very high substrate specificity. In Vibrio splendidus (strain 12B01), this protein is (R)-1-hydroxy-2-aminoethylphosphonate ammonia-lyase.